The sequence spans 112 residues: Large ribosomal subunit protein eL34A (112 aa).

The protein belongs to the eukaryotic ribosomal protein eL34 family. As to quaternary structure, component of the large ribosomal subunit (LSU). Mature yeast ribosomes consist of a small (40S) and a large (60S) subunit. The 40S small subunit contains 1 molecule of ribosomal RNA (18S rRNA) and at least 33 different proteins. The large 60S subunit contains 3 rRNA molecules (25S, 5.8S and 5S rRNA) and at least 46 different proteins.

Its subcellular location is the cytoplasm. Component of the ribosome, a large ribonucleoprotein complex responsible for the synthesis of proteins in the cell. The small ribosomal subunit (SSU) binds messenger RNAs (mRNAs) and translates the encoded message by selecting cognate aminoacyl-transfer RNA (tRNA) molecules. The large subunit (LSU) contains the ribosomal catalytic site termed the peptidyl transferase center (PTC), which catalyzes the formation of peptide bonds, thereby polymerizing the amino acids delivered by tRNAs into a polypeptide chain. The nascent polypeptides leave the ribosome through a tunnel in the LSU and interact with protein factors that function in enzymatic processing, targeting, and the membrane insertion of nascent chains at the exit of the ribosomal tunnel. This Schizosaccharomyces pombe (strain 972 / ATCC 24843) (Fission yeast) protein is Large ribosomal subunit protein eL34A (rpl3401).